Consider the following 407-residue polypeptide: MSAPKKVVLAYSGGLDTSIILKWLQTEYGCEVVTFTADLGQGEELEPARKKAEMMGAAGIYVEDLREEFVRDFVFPMFRANALYEGLYLLGTSIARPLISKRLVEIAEETGADAVSHGATGKGNDQVRFELCAYSLNPEIEVIAPWRKWELGSRTKLIEFAEKHQIPIAKDKRGEAPFSVDANLLHTSSEGKMLEDPAEEAPDHILQRITRPEDAPDTPEMVEITFEKGDAVAINGEPMSPATILTELNRLGGKHGIGILDLVENRFVGMKSRGIYETPGGTVLLEAHRGIEQITLDGASGHLKDSIMPRYAELIYNGFWFSPEREMLQALIDKSQEHVTGTVRLKLYKGAARCVARWSDHSLYSEAHVTFEEDMGAYDQSDAQGFIQLNALRLKLLSARNRKFNGS.

Residues 10-18 and Ala37 contribute to the ATP site; that span reads AYSGGLDTS. Residues Tyr88 and Ser93 each contribute to the L-citrulline site. Gly118 provides a ligand contact to ATP. L-aspartate contacts are provided by Thr120, Asn124, and Asp125. Asn124 provides a ligand contact to L-citrulline. L-citrulline-binding residues include Arg128, Ser179, Ser188, Glu264, and Tyr276.

It belongs to the argininosuccinate synthase family. Type 1 subfamily. Homotetramer.

The protein resides in the cytoplasm. The enzyme catalyses L-citrulline + L-aspartate + ATP = 2-(N(omega)-L-arginino)succinate + AMP + diphosphate + H(+). It functions in the pathway amino-acid biosynthesis; L-arginine biosynthesis; L-arginine from L-ornithine and carbamoyl phosphate: step 2/3. This is Argininosuccinate synthase from Jannaschia sp. (strain CCS1).